Reading from the N-terminus, the 398-residue chain is Carbamoyl phosphate synthase small chain (398 aa).

The segment at 1 to 204 (MSPLLPSFPP…PAYGTLDTGK (204 aa)) is CPSase. L-glutamine is bound by residues Ser53, Gly256, and Gly258. Residues 208–395 (KVVAYDFGVK…VELMNAASKK (188 aa)) form the Glutamine amidotransferase type-1 domain. Residue Cys284 is the Nucleophile of the active site. 5 residues coordinate L-glutamine: Leu285, Gln288, Asn326, Gly328, and Phe329. Active-site residues include His368 and Glu370.

Belongs to the CarA family. Composed of two chains; the small (or glutamine) chain promotes the hydrolysis of glutamine to ammonia, which is used by the large (or ammonia) chain to synthesize carbamoyl phosphate. Tetramer of heterodimers (alpha,beta)4.

The catalysed reaction is hydrogencarbonate + L-glutamine + 2 ATP + H2O = carbamoyl phosphate + L-glutamate + 2 ADP + phosphate + 2 H(+). It carries out the reaction L-glutamine + H2O = L-glutamate + NH4(+). Its pathway is amino-acid biosynthesis; L-arginine biosynthesis; carbamoyl phosphate from bicarbonate: step 1/1. It functions in the pathway pyrimidine metabolism; UMP biosynthesis via de novo pathway; (S)-dihydroorotate from bicarbonate: step 1/3. Small subunit of the glutamine-dependent carbamoyl phosphate synthetase (CPSase). CPSase catalyzes the formation of carbamoyl phosphate from the ammonia moiety of glutamine, carbonate, and phosphate donated by ATP, constituting the first step of 2 biosynthetic pathways, one leading to arginine and/or urea and the other to pyrimidine nucleotides. The small subunit (glutamine amidotransferase) binds and cleaves glutamine to supply the large subunit with the substrate ammonia. In Polynucleobacter necessarius subsp. necessarius (strain STIR1), this protein is Carbamoyl phosphate synthase small chain.